We begin with the raw amino-acid sequence, 276 residues long: uncharacterized protein (276 aa).

7 helical membrane-spanning segments follow: residues 5–25 (TDLI…GMLA), 32–52 (PLVG…GFVG), 64–84 (GVIL…LLAV), 104–124 (AGLA…GLAL), 149–169 (IAVG…VLLP), 193–213 (LWVT…VMLV), and 244–264 (VGIA…GAFF).

Belongs to the monovalent cation:proton antiporter 2 (CPA2) transporter (TC 2.A.37) family.

Its subcellular location is the cell membrane. This is an uncharacterized protein from Methylorubrum extorquens (Methylobacterium dichloromethanicum).